Here is a 168-residue protein sequence, read N- to C-terminus: Transcription antitermination protein NusB (168 aa).

It belongs to the NusB family.

In terms of biological role, involved in transcription antitermination. Required for transcription of ribosomal RNA (rRNA) genes. Binds specifically to the boxA antiterminator sequence of the ribosomal RNA (rrn) operons. This is Transcription antitermination protein NusB from Brucella anthropi (strain ATCC 49188 / DSM 6882 / CCUG 24695 / JCM 21032 / LMG 3331 / NBRC 15819 / NCTC 12168 / Alc 37) (Ochrobactrum anthropi).